The following is a 231-amino-acid chain: Uracil phosphoribosyltransferase (231 aa).

38–42 serves as a coordination point for GTP; it reads KGLVR. 5-phospho-alpha-D-ribose 1-diphosphate is bound by residues Arg87, Arg112, and 140-148; that span reads DPMIATGST. Uracil is bound by residues Ile203 and 208 to 210; that span reads GDA. Asp209 is a binding site for 5-phospho-alpha-D-ribose 1-diphosphate.

It belongs to the UPRTase family. It depends on Mg(2+) as a cofactor.

It catalyses the reaction UMP + diphosphate = 5-phospho-alpha-D-ribose 1-diphosphate + uracil. It participates in pyrimidine metabolism; UMP biosynthesis via salvage pathway; UMP from uracil: step 1/1. Its activity is regulated as follows. Allosterically activated by GTP. Catalyzes the conversion of uracil and 5-phospho-alpha-D-ribose 1-diphosphate (PRPP) to UMP and diphosphate. The protein is Uracil phosphoribosyltransferase of Methanococcus maripaludis (strain C7 / ATCC BAA-1331).